The sequence spans 215 residues: Enolase-phosphatase E1 (215 aa).

Mg(2+)-binding residues include D11 and E13. Substrate is bound by residues S117–S118 and K151. Residue D174 coordinates Mg(2+).

The protein belongs to the HAD-like hydrolase superfamily. MasA/MtnC family. Monomer. The cofactor is Mg(2+).

The protein localises to the cytoplasm. It localises to the nucleus. The catalysed reaction is 5-methylsulfanyl-2,3-dioxopentyl phosphate + H2O = 1,2-dihydroxy-5-(methylsulfanyl)pent-1-en-3-one + phosphate. It functions in the pathway amino-acid biosynthesis; L-methionine biosynthesis via salvage pathway; L-methionine from S-methyl-5-thio-alpha-D-ribose 1-phosphate: step 3/6. It participates in amino-acid biosynthesis; L-methionine biosynthesis via salvage pathway; L-methionine from S-methyl-5-thio-alpha-D-ribose 1-phosphate: step 4/6. In terms of biological role, bifunctional enzyme that catalyzes the enolization of 2,3-diketo-5-methylthiopentyl-1-phosphate (DK-MTP-1-P) into the intermediate 2-hydroxy-3-keto-5-methylthiopentenyl-1-phosphate (HK-MTPenyl-1-P), which is then dephosphorylated to form the acireductone 1,2-dihydroxy-3-keto-5-methylthiopentene (DHK-MTPene). This chain is Enolase-phosphatase E1 (utr4), found in Schizosaccharomyces japonicus (strain yFS275 / FY16936) (Fission yeast).